A 404-amino-acid chain; its full sequence is Probable tRNA sulfurtransferase (404 aa).

The THUMP domain maps to 60–165 (HEVAESLKEI…DEAAYISYED (106 aa)). Residues 183–184 (ML), 208–209 (HF), R265, G287, and Q296 contribute to the ATP site.

It belongs to the ThiI family.

The protein resides in the cytoplasm. It carries out the reaction [ThiI sulfur-carrier protein]-S-sulfanyl-L-cysteine + a uridine in tRNA + 2 reduced [2Fe-2S]-[ferredoxin] + ATP + H(+) = [ThiI sulfur-carrier protein]-L-cysteine + a 4-thiouridine in tRNA + 2 oxidized [2Fe-2S]-[ferredoxin] + AMP + diphosphate. The catalysed reaction is [ThiS sulfur-carrier protein]-C-terminal Gly-Gly-AMP + S-sulfanyl-L-cysteinyl-[cysteine desulfurase] + AH2 = [ThiS sulfur-carrier protein]-C-terminal-Gly-aminoethanethioate + L-cysteinyl-[cysteine desulfurase] + A + AMP + 2 H(+). It functions in the pathway cofactor biosynthesis; thiamine diphosphate biosynthesis. In terms of biological role, catalyzes the ATP-dependent transfer of a sulfur to tRNA to produce 4-thiouridine in position 8 of tRNAs, which functions as a near-UV photosensor. Also catalyzes the transfer of sulfur to the sulfur carrier protein ThiS, forming ThiS-thiocarboxylate. This is a step in the synthesis of thiazole, in the thiamine biosynthesis pathway. The sulfur is donated as persulfide by IscS. This is Probable tRNA sulfurtransferase from Streptococcus agalactiae serotype V (strain ATCC BAA-611 / 2603 V/R).